Here is a 457-residue protein sequence, read N- to C-terminus: Argininosuccinate lyase (457 aa).

Belongs to the lyase 1 family. Argininosuccinate lyase subfamily.

The protein resides in the cytoplasm. The enzyme catalyses 2-(N(omega)-L-arginino)succinate = fumarate + L-arginine. It functions in the pathway amino-acid biosynthesis; L-arginine biosynthesis; L-arginine from L-ornithine and carbamoyl phosphate: step 3/3. This Pectobacterium carotovorum subsp. carotovorum (strain PC1) protein is Argininosuccinate lyase.